A 31-amino-acid polypeptide reads, in one-letter code: Gamma-conotoxin-like As7a (31 aa).

Intrachain disulfides connect cysteine 2/cysteine 16, cysteine 9/cysteine 20, and cysteine 15/cysteine 31. Position 14 is a 4-carboxyglutamate (glutamate 14).

Belongs to the conotoxin O1 superfamily. As to expression, expressed by the venom duct.

Its subcellular location is the secreted. Functionally, gamma-conotoxins may act on voltage-gated non-specific cation pacemaker channels (HCN). Elicits toxic effects in the freshwater snail Pomacea paludosa after intramuscular injection, but it has no effect when injected intracerebrally into mice. The chain is Gamma-conotoxin-like As7a from Conus cancellatus (Cancellate cone).